The sequence spans 196 residues: Zinc metalloproteinase-disintegrin-like bothrojarin-3 (196 aa).

A Disintegrin domain is found at 2-88; sequence PPVCGTELLE…DCPTDDIQRN (87 aa). Val-4, Leu-9, Glu-11, Glu-14, and Asp-17 together coordinate Ca(2+). 13 disulfides stabilise this stretch: Cys-5–Cys-34, Cys-16–Cys-29, Cys-18–Cys-24, Cys-28–Cys-51, Cys-42–Cys-48, Cys-47–Cys-73, Cys-60–Cys-80, Cys-67–Cys-99, Cys-92–Cys-104, Cys-111–Cys-161, Cys-126–Cys-168, Cys-139–Cys-149, and Cys-156–Cys-193. Positions 66-68 match the D/ECD-tripeptide motif; sequence ECD.

This sequence belongs to the venom metalloproteinase (M12B) family. P-III subfamily. P-IIIa sub-subfamily. As to quaternary structure, monomer. It depends on Zn(2+) as a cofactor. Glycosylated. In terms of tissue distribution, expressed by the venom gland.

It localises to the secreted. The hemorrhagic metalloproteinase-disintegrin-like bothrojarin-1 is a potent inhibitor of collagen-induced platelet aggregation by blockage of alpha-2/beta-1 (ITGA2/ITGB1) integrin. It does not present any fibrinogen-clotting activity. This chain is Zinc metalloproteinase-disintegrin-like bothrojarin-3, found in Bothrops jararaca (Jararaca).